The sequence spans 435 residues: Gamma-glutamyl phosphate reductase (435 aa).

This sequence belongs to the gamma-glutamyl phosphate reductase family.

It is found in the cytoplasm. It catalyses the reaction L-glutamate 5-semialdehyde + phosphate + NADP(+) = L-glutamyl 5-phosphate + NADPH + H(+). Its pathway is amino-acid biosynthesis; L-proline biosynthesis; L-glutamate 5-semialdehyde from L-glutamate: step 2/2. In terms of biological role, catalyzes the NADPH-dependent reduction of L-glutamate 5-phosphate into L-glutamate 5-semialdehyde and phosphate. The product spontaneously undergoes cyclization to form 1-pyrroline-5-carboxylate. This chain is Gamma-glutamyl phosphate reductase, found in Synechococcus sp. (strain WH7803).